The chain runs to 112 residues: Mediator of RNA polymerase II transcription subunit 22 (112 aa).

Residues 83 to 112 are disordered; that stretch reads KPEDGGEGQLADELLDKIEDTSDGVDKETA. The span at 96-112 shows a compositional bias: basic and acidic residues; it reads LLDKIEDTSDGVDKETA.

This sequence belongs to the Mediator complex subunit 22 family. In terms of assembly, component of the Mediator complex.

Its subcellular location is the nucleus. Functionally, component of the Mediator complex, a coactivator involved in the regulated transcription of nearly all RNA polymerase II-dependent genes. Mediator functions as a bridge to convey information from gene-specific regulatory proteins to the basal RNA polymerase II transcription machinery. Mediator is recruited to promoters by direct interactions with regulatory proteins and serves as a scaffold for the assembly of a functional preinitiation complex with RNA polymerase II and the general transcription factors. The chain is Mediator of RNA polymerase II transcription subunit 22 (SRB6) from Yarrowia lipolytica (strain CLIB 122 / E 150) (Yeast).